The chain runs to 99 residues: Prostate and testis expressed protein 14 (99 aa).

The first 21 residues, methionine 1–alanine 21, serve as a signal peptide directing secretion. Residues leucine 22–phenylalanine 99 enclose the UPAR/Ly6 domain. 5 disulfides stabilise this stretch: cysteine 24–cysteine 51, cysteine 27–cysteine 36, cysteine 43–cysteine 69, cysteine 73–cysteine 89, and cysteine 90–cysteine 96. An N-linked (GlcNAc...) asparagine glycan is attached at asparagine 40. 2 N-linked (GlcNAc...) asparagine glycosylation sites follow: asparagine 75 and asparagine 82.

The protein belongs to the PATE family. Monomer.

Its subcellular location is the secreted. This is Prostate and testis expressed protein 14 from Rattus norvegicus (Rat).